The following is a 345-amino-acid chain: Methylthioribose-1-phosphate isomerase (345 aa).

Substrate is bound by residues 47 to 49, Arg90, and Gln197; that span reads RGA. Asp238 acts as the Proton donor in catalysis. 248 to 249 lines the substrate pocket; that stretch reads NK.

The protein belongs to the eIF-2B alpha/beta/delta subunits family. MtnA subfamily.

The catalysed reaction is 5-(methylsulfanyl)-alpha-D-ribose 1-phosphate = 5-(methylsulfanyl)-D-ribulose 1-phosphate. It participates in amino-acid biosynthesis; L-methionine biosynthesis via salvage pathway; L-methionine from S-methyl-5-thio-alpha-D-ribose 1-phosphate: step 1/6. Its function is as follows. Catalyzes the interconversion of methylthioribose-1-phosphate (MTR-1-P) into methylthioribulose-1-phosphate (MTRu-1-P). This is Methylthioribose-1-phosphate isomerase from Thermoanaerobacter pseudethanolicus (strain ATCC 33223 / 39E) (Clostridium thermohydrosulfuricum).